A 473-amino-acid polypeptide reads, in one-letter code: Biotin-dependent acetyl-/propionyl-coenzyme A carboxylase beta6 subunit (473 aa).

In terms of domain architecture, CoA carboxyltransferase N-terminal spans 1 to 224 (MTIMAPEAVG…QGHFDRSKAE (224 aa)). Residues 225-473 (AGDTDIHALL…RRGRHKNIPL (249 aa)) enclose the CoA carboxyltransferase C-terminal domain.

It belongs to the AccD/PCCB family. As to quaternary structure, the biotin-dependent acyl-CoA carboxylase complex is composed of AccA3, which contains the biotin carboxylase (BC) and biotin carboxyl carrier protein (BCCP) domains, and AccD6, which contains the carboxyl transferase (CT) domain.

The enzyme catalyses N(6)-carboxybiotinyl-L-lysyl-[protein] + acetyl-CoA = N(6)-biotinyl-L-lysyl-[protein] + malonyl-CoA. It catalyses the reaction N(6)-carboxybiotinyl-L-lysyl-[protein] + propanoyl-CoA = methylmalonyl-CoA + N(6)-biotinyl-L-lysyl-[protein]. Its pathway is lipid metabolism; fatty acid biosynthesis. The protein operates within lipid metabolism; mycolic acid biosynthesis. Functionally, component of a biotin-dependent acyl-CoA carboxylase complex. This subunit transfers the CO2 from carboxybiotin to the CoA ester substrate. When associated with the alpha3 subunit AccA3, is involved in the carboxylation of acetyl-CoA and propionyl-CoA. In Mycobacterium bovis (strain ATCC BAA-935 / AF2122/97), this protein is Biotin-dependent acetyl-/propionyl-coenzyme A carboxylase beta6 subunit (accD6).